An 82-amino-acid chain; its full sequence is MKGMIMLISCLMLIEVVVGGKEGYLLDRSNGCKRSCFFGSTSWCNTECKSKSADKGYCAWPSCYCYGFTDDSKMWHLKTNKC.

The N-terminal stretch at 1–20 (MKGMIMLISCLMLIEVVVGG) is a signal peptide. The region spanning 21–82 (KEGYLLDRSN…KMWHLKTNKC (62 aa)) is the LCN-type CS-alpha/beta domain. 4 disulfide bridges follow: C32/C82, C36/C58, C44/C63, and C48/C65.

The protein belongs to the long (4 C-C) scorpion toxin superfamily. Sodium channel inhibitor family. Beta subfamily. Expressed by the venom gland.

The protein localises to the secreted. Functionally, beta toxins bind voltage-independently at site-4 of sodium channels (Nav) and shift the voltage of activation toward more negative potentials thereby affecting sodium channel activation and promoting spontaneous and repetitive firing. Is toxic to arthropods. This is Toxin TdNa6 from Tityus discrepans (Venezuelan scorpion).